The following is a 423-amino-acid chain: Putative galacturan 1,4-alpha-galacturonidase C (423 aa).

Residues 1–20 (MQLRASVLLSFLGLASVGHA) form the signal peptide. Asn-92, Asn-98, Asn-118, Asn-156, Asn-179, and Asn-191 each carry an N-linked (GlcNAc...) asparagine glycan. 2 PbH1 repeats span residues 215-236 (ATNI…AIKP) and 238-258 (SYNI…AIGS). Catalysis depends on Asp-229, which acts as the Proton donor. Cys-231 and Cys-248 form a disulfide bridge. N-linked (GlcNAc...) asparagine glycans are attached at residues Asn-245, Asn-344, and Asn-362. Residues Cys-379 and Cys-385 are joined by a disulfide bond. Residue Asn-400 is glycosylated (N-linked (GlcNAc...) asparagine).

This sequence belongs to the glycosyl hydrolase 28 family.

It localises to the secreted. The catalysed reaction is [(1-&gt;4)-alpha-D-galacturonosyl](n) + H2O = alpha-D-galacturonate + [(1-&gt;4)-alpha-D-galacturonosyl](n-1). Functionally, specific in hydrolyzing the terminal glycosidic bond of polygalacturonic acid and oligogalacturonates. In Aspergillus niger (strain ATCC MYA-4892 / CBS 513.88 / FGSC A1513), this protein is Putative galacturan 1,4-alpha-galacturonidase C (rgxC).